The chain runs to 397 residues: Growth-regulating factor 5 (397 aa).

Positions 16–51 (PFTPTQWEELEHQALIYKYMVSGVPVPPELIFSIRR) constitute a QLQ domain. Short sequence motifs (bipartite nuclear localization signal) lie at residues 78–96 (RKPDPEPGRCRRTDGKKWR) and 114–121 (RGRNRARK). In terms of domain architecture, WRC spans 81–125 (DPEPGRCRRTDGKKWRCSREAYPDSKYCEKHMHRGRNRARKSLDQ). 4 disordered regions span residues 108-172 (CEKH…SMDA), 197-217 (LDYPYPSTSPKQQQQTLHHAS), 288-320 (PYHHCSTDHNKIDHHHTYSSSSSSQHLHHDHDH), and 340-397 (VLAN…DTGS). Residues 111-120 (HMHRGRNRAR) show a composition bias toward basic residues. Low complexity predominate over residues 128–172 (TTTTPLTSPSLSFTNNNNPSPTLSSSSSSNSSSTTYSASSSSMDA). Residues 288-298 (PYHHCSTDHNK) show a composition bias toward basic and acidic residues.

The protein belongs to the GRF family. Interacts with GIF1. As to expression, strongly expressed in actively growing and developing tissues, such as roots, upper stems, and shoot tips containing the shoot apical meristem (SAM) and flower buds. Also expressed in mature flowers, but weakly expressed in mature stems and leaves.

The protein localises to the nucleus. Its function is as follows. Transcription activator that plays a role in the regulation of cell expansion in leaf and cotyledons tissues. Acts together with GIF1 for the development of appropriate leaf size and shape through the promotion and/or maintenance of cell proliferation activity in leaf primordia. This chain is Growth-regulating factor 5 (GRF5), found in Arabidopsis thaliana (Mouse-ear cress).